We begin with the raw amino-acid sequence, 330 residues long: Delta-aminolevulinic acid dehydratase (330 aa).

K203 acts as the Schiff-base intermediate with substrate in catalysis. 5-aminolevulinate-binding residues include R213 and R224. E240 lines the Mg(2+) pocket. The active-site Schiff-base intermediate with substrate is the K255. The 5-aminolevulinate site is built by S281 and Y320.

The protein belongs to the ALAD family. In terms of assembly, homooctamer.

The enzyme catalyses 2 5-aminolevulinate = porphobilinogen + 2 H2O + H(+). It participates in porphyrin-containing compound metabolism; protoporphyrin-IX biosynthesis; coproporphyrinogen-III from 5-aminolevulinate: step 1/4. Its function is as follows. Catalyzes an early step in the biosynthesis of tetrapyrroles. Binds two molecules of 5-aminolevulinate per subunit, each at a distinct site, and catalyzes their condensation to form porphobilinogen. The polypeptide is Delta-aminolevulinic acid dehydratase (hemB) (Streptomyces coelicolor (strain ATCC BAA-471 / A3(2) / M145)).